Here is a 325-residue protein sequence, read N- to C-terminus: tRNA(Ile)-lysidine synthase (325 aa).

Residue 34–39 (SGGADS) coordinates ATP.

This sequence belongs to the tRNA(Ile)-lysidine synthase family.

It is found in the cytoplasm. The enzyme catalyses cytidine(34) in tRNA(Ile2) + L-lysine + ATP = lysidine(34) in tRNA(Ile2) + AMP + diphosphate + H(+). Its function is as follows. Ligates lysine onto the cytidine present at position 34 of the AUA codon-specific tRNA(Ile) that contains the anticodon CAU, in an ATP-dependent manner. Cytidine is converted to lysidine, thus changing the amino acid specificity of the tRNA from methionine to isoleucine. This is tRNA(Ile)-lysidine synthase from Rhodococcus erythropolis (strain PR4 / NBRC 100887).